The following is a 306-amino-acid chain: Replication termination factor 2 (306 aa).

The tract at residues 193-276 (AKLEKKTKKP…RSIADSEESE (84 aa)) is disordered. Residues 226–240 (GKPEEASLDSREKKT) show a composition bias toward basic and acidic residues. Over residues 243-255 (APKSTAMNESSSG) the composition is skewed to polar residues. S287 carries the phosphoserine modification.

This sequence belongs to the rtf2 family. As to quaternary structure, interacts with DDI2; probably also interacts with DDI1. Post-translationally, undergoes proteasomal degradation, via DDI1 and DDI2. Removal from stalled replisomes and degradation are required for genome stability.

It is found in the chromosome. In terms of biological role, replication termination factor which is a component of the elongating replisome. Required for ATR pathway signaling upon DNA damage and has a positive activity during DNA replication. Might function to facilitate fork pausing at replication fork barriers like the rDNA. May be globally required to stimulate ATR signaling after the fork stalls or encounters a lesion. Interacts with nascent DNA. The protein is Replication termination factor 2 of Homo sapiens (Human).